Here is a 73-residue protein sequence, read N- to C-terminus: uncharacterized protein (73 aa).

The N-terminal stretch at 1-30 (MVDFYFIEEKVAYRAAFTTTGKIAATLGLA) is a signal peptide.

This is an uncharacterized protein from Archaeoglobus fulgidus (strain ATCC 49558 / DSM 4304 / JCM 9628 / NBRC 100126 / VC-16).